Consider the following 616-residue polypeptide: MRRFCRLLFLNSLLSISICKAQNPAHLVADEFKEHFNVEEKQLETVEELLLKMKKLAHSRSFAGREFGHDAVEDSKKEVAISTQQGTIDKKVSPFLFEGDIFLSRRQAVDILKALSKDKTKRLRRSFVSDKTATWKSLPIKYRFHESIDFYTISQIIAAIRFWEDSTCITFENVSDAPVGDYIEFFSGQGCYSMIGRNGGRQGISIGESCVKMGVIEHEIGHALGLWHEQSRPDALGYVSIERDFILPSYISDFLQRDDEIDTLGIPYDLGSVMHYGSTAFSVDQKSKTVVTRDSLYQQTIGQREKLSFYDVATINTAYCKEECKSEKTECEYGGYMRPSKCSECLCPDGLGGEKCEKNEDAKNAECGGILELSDEWKTIESPNYPDPGYEADQKCSWLLKAPKGKRVEIEFIEDFSFLCTSTCVDFVELKISDDLRNTGFRFCCYDKPEISFVSQIDTAIVIFRSQLSADIGFKIQVRSTESEPRTTIAPTIITTTMAPITVDTPNVWADWGEWSMCSRTCGGCGIRSRVRSCRSKKCEGRRQEFGTCNLKACPVDKHCAKLLSNNRLCNGKVCTKNDIAISSCDAPQCCPPFVNVDGMCQSDQENHHDELWLSI.

The N-terminal stretch at 1-21 (MRRFCRLLFLNSLLSISICKA) is a signal peptide. Positions 22–125 (QNPAHLVADE…SKDKTKRLRR (104 aa)) are excised as a propeptide. A Peptidase M12A domain is found at 126–321 (SFVSDKTATW…VATINTAYCK (196 aa)). Intrachain disulfides connect Cys168-Cys320, Cys191-Cys210, Cys324-Cys345, Cys347-Cys356, Cys367-Cys396, Cys424-Cys444, Cys518-Cys549, Cys522-Cys554, and Cys534-Cys539. Residue Asn173 is glycosylated (N-linked (GlcNAc...) asparagine). Residue His218 participates in Zn(2+) binding. The active site involves Glu219. Residues His222 and His228 each contribute to the Zn(2+) site. The 42-residue stretch at 316-357 (NTAYCKEECKSEKTECEYGGYMRPSKCSECLCPDGLGGEKCE) folds into the EGF-like domain. A CUB domain is found at 367–481 (CGGILELSDE…IGFKIQVRST (115 aa)). The region spanning 506–555 (PNVWADWGEWSMCSRTCGGCGIRSRVRSCRSKKCEGRRQEFGTCNLKACP) is the TSP type-1 domain.

Zn(2+) is required as a cofactor.

Its subcellular location is the secreted. Mtalloprotease. Involved in molting, a process during larval stages in which a new cuticle is formed and the old cuticle is shed. The polypeptide is Zinc metalloproteinase nas-36 (Caenorhabditis briggsae).